Reading from the N-terminus, the 460-residue chain is MFS-type transporter PUL3 (460 aa).

8 helical membrane passes run 16–36 (AVTL…SSVV), 50–70 (YLFI…FIIG), 81–101 (WVII…SCAG), 113–133 (IICG…TAIS), 151–171 (GICM…DFTV), 181–201 (APTF…MFVL), 240–260 (MFLS…FLTL), and 271–291 (VAFM…PDLV). A disordered region spans residues 300–323 (PSTQDETDTSDNDKIEKEESEQKS). A compositionally biased stretch (basic and acidic residues) spans 310 to 323 (DNDKIEKEESEQKS). A run of 4 helical transmembrane segments spans residues 333 to 353 (VSLT…MIGA), 369 to 389 (IFFT…GSSV), 408 to 428 (FIGA…AALY), and 433 to 453 (GLPI…PSLV).

Belongs to the major facilitator superfamily. TCR/Tet family.

Its subcellular location is the cell membrane. In terms of biological role, MFS-type transporer required for the uptake of iron via the uptake of the siderophore pulcherrimin-iron complex. This chain is MFS-type transporter PUL3, found in Kluyveromyces lactis (strain ATCC 8585 / CBS 2359 / DSM 70799 / NBRC 1267 / NRRL Y-1140 / WM37) (Yeast).